Consider the following 424-residue polypeptide: UPF0597 protein Shewmr7_2876 (424 aa).

The protein belongs to the UPF0597 family.

The polypeptide is UPF0597 protein Shewmr7_2876 (Shewanella sp. (strain MR-7)).